Reading from the N-terminus, the 424-residue chain is UDP-N-acetylglucosamine 1-carboxyvinyltransferase (424 aa).

K22 to N23 serves as a coordination point for phosphoenolpyruvate. Residue R93 coordinates UDP-N-acetyl-alpha-D-glucosamine. The active-site Proton donor is the C117. At C117 the chain carries 2-(S-cysteinyl)pyruvic acid O-phosphothioketal. UDP-N-acetyl-alpha-D-glucosamine contacts are provided by residues R122–L126, D307, and V329.

It belongs to the EPSP synthase family. MurA subfamily.

The protein resides in the cytoplasm. It catalyses the reaction phosphoenolpyruvate + UDP-N-acetyl-alpha-D-glucosamine = UDP-N-acetyl-3-O-(1-carboxyvinyl)-alpha-D-glucosamine + phosphate. Its pathway is cell wall biogenesis; peptidoglycan biosynthesis. Its function is as follows. Cell wall formation. Adds enolpyruvyl to UDP-N-acetylglucosamine. In Chlorobium limicola (strain DSM 245 / NBRC 103803 / 6330), this protein is UDP-N-acetylglucosamine 1-carboxyvinyltransferase.